The sequence spans 442 residues: MPENSPETMTRNRSIFLLSLGCSKNTVDSERLIGQARRKGLSFTNEPDEADIVIINTCGFIADAKTESIDEILAAAEKRKNGEIEALYVMGCLSALYAAELRAELPEVDRFFGTADLPEILNILGTAYDPATRFERSLLSPSHYAWLKLSEGCSRTCSFCAIPKMRGRYKSESMEDLLQEATRLKAKGVKELNLIAQDITPYGLDLYGTSRLNDLMRELSDLNFDWIRLLYAYPLDFPLEVIDTMRERENICDYLDMPVQHICDRILASMKRGIDKQGTIGLLESIRKRNPNIRLRTTMIVGYPGETRAEFEELLQFVREFRFDRLGCFPYSHEEHTAAYDNLEDDIPEEEKQERVGELMELQEGISEKKNRALEEKALKVLVEEVEDNLAFARTEYDAPEVDNECVLDTAGIDIRPGDFCMATIEESSAYELVGRIKNVIP.

Residues 13–129 enclose the MTTase N-terminal domain; sequence RSIFLLSLGC…ILNILGTAYD (117 aa). Cysteine 22, cysteine 58, cysteine 92, cysteine 153, cysteine 157, and cysteine 160 together coordinate [4Fe-4S] cluster. The region spanning 139–369 is the Radical SAM core domain; sequence LSPSHYAWLK…MELQEGISEK (231 aa). Positions 372–439 constitute a TRAM domain; it reads RALEEKALKV…AYELVGRIKN (68 aa).

This sequence belongs to the methylthiotransferase family. RimO subfamily. It depends on [4Fe-4S] cluster as a cofactor.

It localises to the cytoplasm. The enzyme catalyses L-aspartate(89)-[ribosomal protein uS12]-hydrogen + (sulfur carrier)-SH + AH2 + 2 S-adenosyl-L-methionine = 3-methylsulfanyl-L-aspartate(89)-[ribosomal protein uS12]-hydrogen + (sulfur carrier)-H + 5'-deoxyadenosine + L-methionine + A + S-adenosyl-L-homocysteine + 2 H(+). Functionally, catalyzes the methylthiolation of an aspartic acid residue of ribosomal protein uS12. The protein is Ribosomal protein uS12 methylthiotransferase RimO of Chlorobium phaeobacteroides (strain BS1).